Here is a 504-residue protein sequence, read N- to C-terminus: Anaerobic nitric oxide reductase transcription regulator NorR (504 aa).

4-aspartylphosphate is present on aspartate 57. In terms of domain architecture, Sigma-54 factor interaction spans 187 to 416 (MIGLSPGMTQ…LEHAIHRAVV (230 aa)). Residues 215 to 222 (GETGTGKE) and 278 to 287 (ADNGTLFLDE) contribute to the ATP site. The H-T-H motif DNA-binding region spans 479 to 498 (WAACARMLETDVANLHRLAK).

It participates in nitrogen metabolism; nitric oxide reduction. Its function is as follows. Required for the expression of anaerobic nitric oxide (NO) reductase, acts as a transcriptional activator for at least the norVW operon. Activation also requires sigma-54. This chain is Anaerobic nitric oxide reductase transcription regulator NorR, found in Escherichia coli O139:H28 (strain E24377A / ETEC).